The sequence spans 838 residues: Transient receptor potential cation channel subfamily V member 1 (838 aa).

Disordered regions lie at residues Met-1–Cys-63 and Arg-86–Pro-109. Residues Met-1–Arg-432 lie on the Cytoplasmic side of the membrane. The stretch at Arg-110 to Arg-138 is one ANK 1 repeat. Arg-115 serves as a coordination point for ATP. Position 116 is a phosphoserine; by PKA and PKD (Ser-116). Thr-144 is modified (phosphothreonine; by PKA; in vitro). The ANK 2 repeat unit spans residues Thr-153–Ser-185. ATP contacts are provided by residues Lys-155, Lys-160, Asn-164, Tyr-199–Gln-202, and Glu-210–Arg-211. 4 ANK repeats span residues Thr-203 to Gln-228, Glu-249 to Asp-276, Asn-285 to Pro-321, and Thr-335 to His-358. A Phosphothreonine; by PKA; in vitro modification is found at Thr-370. The stretch at Asn-393–Val-415 is one ANK 7 repeat. A helical membrane pass occupies residues Ile-433 to Tyr-453. The Extracellular portion of the chain corresponds to Tyr-454 to Asp-471. Residues Tyr-472–Leu-497 form a helical membrane-spanning segment. Residues Gln-498–Ser-510 lie on the Cytoplasmic side of the membrane. Ser-502 is modified (phosphoserine; by PKC/PRKCE). Tyr-511–Ser-512 contacts resiniferatoxin. Residues Tyr-511–Phe-531 form a helical membrane-spanning segment. Residues Ser-532–Lys-535 lie on the Extracellular side of the membrane. The helical transmembrane segment at Glu-536–Thr-556 threads the bilayer. Resiniferatoxin contacts are provided by Thr-550 and Arg-557. Over Arg-557–Lys-571 the chain is Cytoplasmic. A helical transmembrane segment spans residues Met-572 to Ile-599. Topologically, residues Glu-600–Ser-626 are extracellular. N-linked (GlcNAc...) asparagine glycosylation occurs at Asn-604. The segment at residues Tyr-627 to Phe-649 is an intramembrane region (pore-forming). Residue Gly-643 participates in Na(+) binding. The Selectivity filter motif lies at Gly-643–Asp-646. Position 646 (Asp-646) interacts with Ca(2+). Residues Thr-650–Ala-657 are Extracellular-facing. The chain crosses the membrane as a helical span at residues Val-658–Val-686. The AD stretch occupies residues Glu-684 to Phe-712. The Cytoplasmic portion of the chain corresponds to Asn-687 to Lys-838. The residue at position 704 (Thr-704) is a Phosphothreonine. Residues Glu-767–Thr-801 are interaction with calmodulin. At Ser-774 the chain carries Phosphoserine; by PKA; in vitro. Positions Leu-777–Leu-792 are required for PIP2-mediated channel inhibition. Ser-800 carries the phosphoserine; by PKC/PRKCE and PKC/PRKCZ modification. At Ser-820 the chain carries Phosphoserine; by PKA; in vitro.

The protein belongs to the transient receptor (TC 1.A.4) family. TrpV subfamily. TRPV1 sub-subfamily. Homotetramer. Interacts with PIRT. May also form a heteromeric channel with TRPV3. Interacts with CALM, PRKCM and CSK. Interacts with PRKCG and NTRK1, probably by forming a trimeric complex. Interacts with the Scolopendra mutilans RhTx toxin. Interacts with the spider Tau-theraphotoxin-Hs1a. Interacts with TMEM100. Interacts with PACS2. In terms of processing, phosphorylation by PKA reverses capsaicin-induced dephosphorylation at multiple sites, probably including Ser-116 as a major phosphorylation site. Phosphorylation by CAMKII seems to regulate binding to vanilloids. Phosphorylated and modulated by PRKCE, PRKCM and probably PRKCZ. Dephosphorylation by calcineurin seems to lead to receptor desensitization and phosphorylation by CAMKII recovers activity. Predominantly expressed in trigeminal and dorsal root sensory ganglia. Expressed also in hippocampus, cortex, cerebellum, olfactory bulb, mesencephalon and hindbrain. High expression in the cell bodies and dendrites of neurons in the hippocampus and in the cortex. In the brain detected also in astrocytes and pericytes (at protein level). Isoform 1 and isoform 3 are expressed in brain and peripheral blood mononuclear cells.

It is found in the postsynaptic cell membrane. It localises to the cell projection. The protein localises to the dendritic spine membrane. The protein resides in the cell membrane. The catalysed reaction is Ca(2+)(in) = Ca(2+)(out). It catalyses the reaction Mg(2+)(in) = Mg(2+)(out). It carries out the reaction Na(+)(in) = Na(+)(out). The enzyme catalyses K(+)(in) = K(+)(out). Channel activity is activated via the interaction with PIRT and phosphatidylinositol 4,5-bisphosphate (PIP2). Both PIRT and PIP2 are required to activate channel activity. The channel is sensitized by ATP binding. Repeated stimulation with capsaicin gives rise to progressively smaller responses, due to desensitization. This desensitization is triggered by the influx of calcium ions and is inhibited by elevated ATP levels. Ca(2+) and CALM displace ATP from its binding site and trigger a conformation change that leads to a closed, desensitized channel. Intracellular PIP2 inhibits desensitization. The double-knot toxin (DkTx) from the Chinese earth tiger tarantula activates the channel and traps it in an open conformation. The Scolopendra mutilans RhTx toxin potentiates the heat activation pathway mediated by this channel by binding to the charge-rich outer pore region (in an activated state). In terms of biological role, non-selective calcium permeant cation channel involved in detection of noxious chemical and thermal stimuli. Seems to mediate proton influx and may be involved in intracellular acidosis in nociceptive neurons. Involved in mediation of inflammatory pain and hyperalgesia. Sensitized by a phosphatidylinositol second messenger system activated by receptor tyrosine kinases, which involves PKC isozymes and PCL. Activation by vanilloids, like capsaicin, and temperatures higher than 42 degrees Celsius. Upon activation, exhibits a time- and Ca(2+)-dependent outward rectification, followed by a long-lasting refractory state. Mild extracellular acidic pH (6.5) potentiates channel activation by noxious heat and vanilloids, whereas acidic conditions (pH &lt;6) directly activate the channel. Can be activated by endogenous compounds, including 12-hydroperoxytetraenoic acid and bradykinin. Acts as ionotropic endocannabinoid receptor with central neuromodulatory effects. Triggers a form of long-term depression (TRPV1-LTD) mediated by the endocannabinoid anandamine in the hippocampus and nucleus accumbens by affecting AMPA receptors endocytosis. Functionally, does not display channel activity in response to noxious chemical compounds, such as capsaicin and the vanilloid resiniferatoxin. Channel activity is not elicited by mildly acidic extracellular pH, and only slight channel activity is observed in response to noxiuos heat stimuli. The polypeptide is Transient receptor potential cation channel subfamily V member 1 (Trpv1) (Rattus norvegicus (Rat)).